The following is a 130-amino-acid chain: Fumarate reductase subunit C (130 aa).

The next 3 helical transmembrane spans lie at 37 to 57, 60 to 80, and 109 to 129; these read VWFS…PAGW, FVGF…LLAA, and VIKA…AVAL.

The protein belongs to the FrdC family. Part of an enzyme complex containing four subunits: a flavoprotein (FrdA), an iron-sulfur protein (FrdB), and two hydrophobic anchor proteins (FrdC and FrdD).

It is found in the cell inner membrane. In terms of biological role, two distinct, membrane-bound, FAD-containing enzymes are responsible for the catalysis of fumarate and succinate interconversion; fumarate reductase is used in anaerobic growth, and succinate dehydrogenase is used in aerobic growth. Anchors the catalytic components of the fumarate reductase complex to the cell inner membrane, binds quinones. In Yersinia enterocolitica serotype O:8 / biotype 1B (strain NCTC 13174 / 8081), this protein is Fumarate reductase subunit C.